The sequence spans 272 residues: Ribosomal RNA small subunit methyltransferase A (272 aa).

N18, L20, G45, E66, D91, and N113 together coordinate S-adenosyl-L-methionine.

Belongs to the class I-like SAM-binding methyltransferase superfamily. rRNA adenine N(6)-methyltransferase family. RsmA subfamily.

The protein localises to the cytoplasm. The catalysed reaction is adenosine(1518)/adenosine(1519) in 16S rRNA + 4 S-adenosyl-L-methionine = N(6)-dimethyladenosine(1518)/N(6)-dimethyladenosine(1519) in 16S rRNA + 4 S-adenosyl-L-homocysteine + 4 H(+). Its function is as follows. Specifically dimethylates two adjacent adenosines (A1518 and A1519) in the loop of a conserved hairpin near the 3'-end of 16S rRNA in the 30S particle. May play a critical role in biogenesis of 30S subunits. The chain is Ribosomal RNA small subunit methyltransferase A from Serratia proteamaculans (strain 568).